The chain runs to 407 residues: 1-deoxy-D-xylulose 5-phosphate reductoisomerase (407 aa).

Residues threonine 25, glycine 26, serine 27, isoleucine 28, asparagine 53, and asparagine 136 each coordinate NADPH. Lysine 137 is a binding site for 1-deoxy-D-xylulose 5-phosphate. An NADPH-binding site is contributed by glutamate 138. A Mn(2+)-binding site is contributed by aspartate 162. Serine 163, glutamate 164, serine 188, and histidine 211 together coordinate 1-deoxy-D-xylulose 5-phosphate. Glutamate 164 contacts Mn(2+). Position 217 (glycine 217) interacts with NADPH. 4 residues coordinate 1-deoxy-D-xylulose 5-phosphate: serine 224, asparagine 229, lysine 230, and glutamate 233. Glutamate 233 is a binding site for Mn(2+).

Belongs to the DXR family. Mg(2+) serves as cofactor. Requires Mn(2+) as cofactor.

It carries out the reaction 2-C-methyl-D-erythritol 4-phosphate + NADP(+) = 1-deoxy-D-xylulose 5-phosphate + NADPH + H(+). The protein operates within isoprenoid biosynthesis; isopentenyl diphosphate biosynthesis via DXP pathway; isopentenyl diphosphate from 1-deoxy-D-xylulose 5-phosphate: step 1/6. Its function is as follows. Catalyzes the NADPH-dependent rearrangement and reduction of 1-deoxy-D-xylulose-5-phosphate (DXP) to 2-C-methyl-D-erythritol 4-phosphate (MEP). This chain is 1-deoxy-D-xylulose 5-phosphate reductoisomerase, found in Rhodopseudomonas palustris (strain TIE-1).